A 307-amino-acid chain; its full sequence is Solute carrier family 25 member 53 (307 aa).

Positions 1–23 are disordered; the sequence is MGEQNHSPGKELQHRTRAEAPGK. The span at 8-22 shows a compositional bias: basic and acidic residues; that stretch reads PGKELQHRTRAEAPG. Solcar repeat units follow at residues 25-105, 112-202, and 210-302; these read SWHS…LLCF, HTLG…IQDG, and HWVP…HSRK. The next 6 helical transmembrane spans lie at 31–51, 82–102, 112–132, 181–201, 215–235, and 269–290; these read YALGAVSNFMSTFLTFPIYKV, YPPLLSKTLQGTLLFGTYDSL, HTLGHRWAAGLMSGVVEAVAL, VLARNSLGSALYFSFKDPIQD, LVSGSVNGTITCLVLYPLIVL, and IYRGGSLVILRSSVTWGLTTAI.

This sequence belongs to the mitochondrial carrier (TC 2.A.29) family.

The protein localises to the mitochondrion inner membrane. The chain is Solute carrier family 25 member 53 (SLC25A53) from Homo sapiens (Human).